The following is a 775-amino-acid chain: Putative ankyrin repeat protein RBE_0801 (775 aa).

6 ANK repeats span residues 66 to 95 (HSLP…ENTE), 300 to 329 (ATTV…KVEN), 331 to 356 (ILQE…IKSF), 357 to 385 (TNDY…NIVG), 447 to 476 (IPDV…SFDF), and 523 to 552 (GDDK…KQGI).

This Rickettsia bellii (strain RML369-C) protein is Putative ankyrin repeat protein RBE_0801.